Consider the following 454-residue polypeptide: Replicative DNA helicase DnaC (454 aa).

Residues 179 to 445 (RKGDITGIPT…NKFVNLERRF (267 aa)) form the SF4 helicase domain. 210-217 (ARPSVGKT) provides a ligand contact to ATP.

It belongs to the helicase family. DnaB subfamily. As to quaternary structure, the DNA replisome assembles sequentially on oriC in this order; DnaA, DnaD, DnaB, DnaI-DnaC helicase. Monomer in the absence of ATP, in its presence forms a probable homohexamer which is not active as a helicase in vitro. Interacts separately and simultaneously with helicase loaders DnaB and DnaI. Interaction with DnaB does not require ATP. Interaction with DnaI requires ATP, probably forms a DnaC(6):DnaI(6) complex, which is not active as a helicase.

The protein localises to the cytoplasm. It localises to the nucleoid. The enzyme catalyses Couples ATP hydrolysis with the unwinding of duplex DNA at the replication fork by translocating in the 5'-3' direction. This creates two antiparallel DNA single strands (ssDNA). The leading ssDNA polymer is the template for DNA polymerase III holoenzyme which synthesizes a continuous strand.. It carries out the reaction ATP + H2O = ADP + phosphate + H(+). The main replicative DNA helicase, it participates in initiation and elongation during chromosome replication. Travels ahead of the DNA replisome, separating dsDNA into templates for DNA synthesis. The monomer has helicase activity in the presence of DnaI which is further increased by DnaB; the purified oligomeric form (probably a DnaC hexamer) does not have helicase activity in vitro, nor does the DnaC(6):DnaI(6) complex. The direction was not determined but is probably 5'-3'. Helicase activity requires an rNTP and is inactive with dNTPs. Has weak ATPase activity as a monomer, as an oligomer has ATPase activity which is stimulated by single-stranded (ss)DNA and further stimulated by DnaI and more by DnaB. In terms of biological role, deletion of a single T residue in the promoter region (a run of 8 Ts becomes 7 Ts) decreases the helicase levels by 50%, decreasing DNA replication inititation during fast growth in rich medium. Suppresses the synthetic lethality of a dnaA1-yabA deletion for growth on rich medium. In Bacillus subtilis (strain 168), this protein is Replicative DNA helicase DnaC.